The primary structure comprises 241 residues: Superoxide dismutase [Mn] 2, mitochondrial (241 aa).

4 residues coordinate Mn(2+): histidine 60, histidine 108, aspartate 197, and histidine 201.

Belongs to the iron/manganese superoxide dismutase family. Homotetramer. The cofactor is Mn(2+).

The protein resides in the mitochondrion matrix. The enzyme catalyses 2 superoxide + 2 H(+) = H2O2 + O2. In terms of biological role, destroys superoxide anion radicals which are normally produced within the cells and which are toxic to biological systems. The protein is Superoxide dismutase [Mn] 2, mitochondrial (MSD2) of Arabidopsis thaliana (Mouse-ear cress).